A 335-amino-acid polypeptide reads, in one-letter code: Aliphatic sulfonates import ATP-binding protein SsuB (335 aa).

Residues Val-74–Leu-293 form the ABC transporter domain. Residue Gly-106 to Ser-113 participates in ATP binding. Positions Ala-308–Val-335 are disordered.

The protein belongs to the ABC transporter superfamily. Aliphatic sulfonates importer (TC 3.A.1.17.2) family. In terms of assembly, the complex is composed of two ATP-binding proteins (SsuB), two transmembrane proteins (SsuC) and a solute-binding protein (SsuA).

The protein localises to the cell inner membrane. The enzyme catalyses ATP + H2O + aliphatic sulfonate-[sulfonate-binding protein]Side 1 = ADP + phosphate + aliphatic sulfonateSide 2 + [sulfonate-binding protein]Side 1.. In terms of biological role, part of the ABC transporter complex SsuABC involved in aliphatic sulfonates import. Responsible for energy coupling to the transport system. This is Aliphatic sulfonates import ATP-binding protein SsuB from Burkholderia mallei (strain ATCC 23344).